A 354-amino-acid polypeptide reads, in one-letter code: Probable cinnamyl alcohol dehydrogenase 1 (354 aa).

The Zn(2+) site is built by C47, H69, E70, C100, C103, C106, C114, and C163. Residues T167, 188–193 (GLGGLG), 211–216 (STSESK), T251, and 297–299 (SVT) each bind NADP(+).

Belongs to the zinc-containing alcohol dehydrogenase family. As to quaternary structure, homodimer. Zn(2+) is required as a cofactor.

It catalyses the reaction (E)-cinnamyl alcohol + NADP(+) = (E)-cinnamaldehyde + NADPH + H(+). The catalysed reaction is (E)-coniferol + NADP(+) = (E)-coniferaldehyde + NADPH + H(+). It carries out the reaction (E)-sinapyl alcohol + NADP(+) = (E)-sinapaldehyde + NADPH + H(+). The enzyme catalyses (E)-4-coumaroyl alcohol + NADP(+) = (E)-4-coumaraldehyde + NADPH + H(+). It catalyses the reaction (E)-caffeyl alcohol + NADP(+) = (E)-caffeyl aldehyde + NADPH + H(+). It functions in the pathway aromatic compound metabolism; phenylpropanoid biosynthesis. In terms of biological role, involved in lignin biosynthesis. Catalyzes the final step specific for the production of lignin monomers. Catalyzes the NADPH-dependent reduction of coniferaldehyde, 5-hydroxyconiferaldehyde, sinapaldehyde, 4-coumaraldehyde and caffeyl aldehyde to their respective alcohols. This chain is Probable cinnamyl alcohol dehydrogenase 1, found in Oryza sativa subsp. japonica (Rice).